Consider the following 364-residue polypeptide: Isoflavone 4'-O-methyltransferase (364 aa).

Residues 206-209 (VGGG), Asp-230, 230-231 (DQ), 250-251 (DM), and Lys-264 each bind S-adenosyl-L-methionine. His-268 acts as the Proton acceptor in catalysis.

This sequence belongs to the class I-like SAM-binding methyltransferase superfamily. Cation-independent O-methyltransferase family. COMT subfamily. Homodimer.

The enzyme catalyses a 4'-hydroxyisoflavone + S-adenosyl-L-methionine = a 4'-methoxyisoflavone + S-adenosyl-L-homocysteine + H(+). It catalyses the reaction (2R,3S)-2,4',7-trihydroxyisoflavanone + S-adenosyl-L-methionine = (2R,3S)-2,7-dihydroxy-4'-methoxyisoflavanone + S-adenosyl-L-homocysteine + H(+). Its function is as follows. 2-hydroxyisoflavanone 4'-O-methyltransferase involved in the biosynthesis of the phytoalexin medicarpin. Has also an in vitro (+)-6a-hydroxymaackiain-3-0-methyltransferase activity, converting the pterocarpan 6a-hydroxymaackiain into pisatin. No activity with di- or trihydroxylated isoflavones, including daidzein and genistein, or with (-)-medicarpin and maackiain. The dual activity for either 3- or 4'-O-methylation depends upon substrate availability. This chain is Isoflavone 4'-O-methyltransferase (HI4'OMT), found in Medicago truncatula (Barrel medic).